Here is a 999-residue protein sequence, read N- to C-terminus: Caspase recruitment domain-containing protein 14 (999 aa).

One can recognise a CARD domain in the interval 15 to 107 (DEEMLWDMLE…DVYTLVTGLQ (93 aa)). Positions 125-411 (TECLAGAISS…QLRRLQAEAP (287 aa)) form a coiled coil. Positions 409–565 (EAPGGPKQEA…RRPARKILSQ (157 aa)) are maintains the protein in an inactive state. S541 carries the post-translational modification Phosphoserine. Residues 572–655 (QGDALLEQIG…SCYLSVKINT (84 aa)) form the PDZ domain. In terms of domain architecture, Guanylate kinase-like spans 803-986 (SESCFTLAPY…LLSCVRLAIA (184 aa)).

As to quaternary structure, interacts (via CARD domain) with BCL10 (via CARD domain). Forms a complex with MALT1 and BCL10; resulting in the formation of a CBM (CARD14-BLC10-MALT1) complex. Interacts with TRAF2, TRAF3 and TRAF6.

The protein resides in the cytoplasm. In terms of biological role, acts as a scaffolding protein that can activate the inflammatory transcription factor NF-kappa-B and p38/JNK MAP kinase signaling pathways. Forms a signaling complex with BCL10 and MALT1, and activates MALT1 proteolytic activity and inflammatory gene expression. MALT1 is indispensable for CARD14-induced activation of NF-kappa-B and p38/JNK MAP kinases. May play a role in signaling mediated by TRAF2, TRAF3 and TRAF6 and protects cells against apoptosis. In Mus musculus (Mouse), this protein is Caspase recruitment domain-containing protein 14 (Card14).